Reading from the N-terminus, the 95-residue chain is Progonadoliberin-1 (95 aa).

An N-terminal signal peptide occupies residues 1–23 (MAPQTSNLWLLLVVMMVMSQGCC). Pyrrolidone carboxylic acid is present on Gln-24. Gly-33 carries the glycine amide modification.

This sequence belongs to the GnRH family.

It localises to the secreted. Functionally, stimulates the secretion of gonadotropins. The chain is Progonadoliberin-1 (gnrh1) from Pagrus major (Red sea bream).